The primary structure comprises 365 residues: tRNA 2-selenouridine synthase (365 aa).

One can recognise a Rhodanese domain in the interval 12-136 (FLDDVPMMDM…LRTFLLDTTQ (125 aa)). Cysteine 95 (S-selanylcysteine intermediate) is an active-site residue.

It belongs to the SelU family. In terms of assembly, monomer.

The catalysed reaction is 5-methylaminomethyl-2-thiouridine(34) in tRNA + selenophosphate + (2E)-geranyl diphosphate + H2O + H(+) = 5-methylaminomethyl-2-selenouridine(34) in tRNA + (2E)-thiogeraniol + phosphate + diphosphate. The enzyme catalyses 5-methylaminomethyl-2-thiouridine(34) in tRNA + (2E)-geranyl diphosphate = 5-methylaminomethyl-S-(2E)-geranyl-thiouridine(34) in tRNA + diphosphate. It catalyses the reaction 5-methylaminomethyl-S-(2E)-geranyl-thiouridine(34) in tRNA + selenophosphate + H(+) = 5-methylaminomethyl-2-(Se-phospho)selenouridine(34) in tRNA + (2E)-thiogeraniol. It carries out the reaction 5-methylaminomethyl-2-(Se-phospho)selenouridine(34) in tRNA + H2O = 5-methylaminomethyl-2-selenouridine(34) in tRNA + phosphate. In terms of biological role, involved in the post-transcriptional modification of the uridine at the wobble position (U34) of tRNA(Lys), tRNA(Glu) and tRNA(Gln). Catalyzes the conversion of 2-thiouridine (S2U-RNA) to 2-selenouridine (Se2U-RNA). Acts in a two-step process involving geranylation of 2-thiouridine (S2U) to S-geranyl-2-thiouridine (geS2U) and subsequent selenation of the latter derivative to 2-selenouridine (Se2U) in the tRNA chain. This Pseudomonas putida (strain W619) protein is tRNA 2-selenouridine synthase.